A 681-amino-acid chain; its full sequence is U3 small nucleolar ribonucleoprotein protein MPP10 (681 aa).

Phosphoserine occurs at positions 61, 120, and 139. Residues 105–147 show a composition bias toward acidic residues; the sequence is SLLPESEEQEREEDGSEIEADDKEDLEDLEEEEVSDMGNDDPE. Disordered regions lie at residues 105-202 and 216-364; these read SLLP…IVDD and NIEK…EKRQ. The stretch at 109–138 forms a coiled coil; it reads ESEEQEREEDGSEIEADDKEDLEDLEEEEV. Basic and acidic residues predominate over residues 148–162; the sequence is MGERAENSSKSDLRK. A phosphoserine mark is found at S163, S167, and S171. Positions 180 to 190 are enriched in polar residues; that stretch reads LEQQSKVQNKG. Basic and acidic residues-rich tracts occupy residues 193–202 and 216–226; these read KPREKSIVDD and NIEKEEERKDD. The stretch at 205-239 forms a coiled coil; it reads FKLSEMEAYLENIEKEEERKDDNDEEEEDIDFFED. The segment covering 227–247 has biased composition (acidic residues); that stretch reads NDEEEEDIDFFEDIDSDEDEG. Position 242 is a phosphoserine (S242). Residues 253–264 are compositionally biased toward basic residues; the sequence is KKLKSGKSSRNL. S275 and S289 each carry phosphoserine. Positions 280-290 are enriched in basic and acidic residues; the sequence is TNVHDDELDSN. 2 coiled-coil regions span residues 284 to 324 and 348 to 382; these read DDEL…NKQH and NVKKNSDEVKSSFEKRQEKMNEKIASLEKELLEKK. A compositionally biased stretch (acidic residues) spans 291 to 318; it reads KEDDEIAEEEAEELSISETDEDDDLQEN. The segment covering 319–329 has biased composition (basic and acidic residues); sequence EDNKQHKESLK. K350 is covalently cross-linked (Glycyl lysine isopeptide (Lys-Gly) (interchain with G-Cter in SUMO2)). The span at 351–364 shows a compositional bias: basic and acidic residues; it reads KNSDEVKSSFEKRQ. Glycyl lysine isopeptide (Lys-Gly) (interchain with G-Cter in SUMO2) cross-links involve residues K382 and K394. Residues 469–490 are a coiled coil; it reads LAEIYEQEYIKLNQQKTAEEEN. A Glycyl lysine isopeptide (Lys-Gly) (interchain with G-Cter in SUMO2) cross-link involves residue K555. Over residues 558–575 the composition is skewed to basic and acidic residues; that stretch reads NKAGDIKTAAEKTATDKK. Residues 558–606 are disordered; sequence NKAGDIKTAAEKTATDKKRERRKKKYQKRMKIKEKEKRRKLLEKSSVDQ. The stretch at 574–604 forms a coiled coil; sequence KKRERRKKKYQKRMKIKEKEKRRKLLEKSSV. The segment covering 576–598 has biased composition (basic residues); that stretch reads RERRKKKYQKRMKIKEKEKRRKL. At K609 the chain carries N6-acetyllysine. Glycyl lysine isopeptide (Lys-Gly) (interchain with G-Cter in SUMO2) cross-links involve residues K632 and K649. Residues 648–670 are a coiled coil; the sequence is SKLQDQVKMQINDAKKTEKKKKK. The disordered stretch occupies residues 660–681; that stretch reads DAKKTEKKKKKRQDISVHKLKL. Basic and acidic residues predominate over residues 672–681; that stretch reads QDISVHKLKL.

It belongs to the MPP10 family. As to quaternary structure, part of the small subunit (SSU) processome, composed of more than 70 proteins and the RNA chaperone small nucleolar RNA (snoRNA) U3. Component of a heterotrimeric complex containing IMP3, IMP4 and MPHOSPH10. Interacts with IMP3 and IMP4. Phosphorylated in M (mitotic) phase.

It localises to the nucleus. Its subcellular location is the nucleolus. It is found in the chromosome. Component of the 60-80S U3 small nucleolar ribonucleoprotein (U3 snoRNP). Required for the early cleavages during pre-18S ribosomal RNA processing. Part of the small subunit (SSU) processome, first precursor of the small eukaryotic ribosomal subunit. During the assembly of the SSU processome in the nucleolus, many ribosome biogenesis factors, an RNA chaperone and ribosomal proteins associate with the nascent pre-rRNA and work in concert to generate RNA folding, modifications, rearrangements and cleavage as well as targeted degradation of pre-ribosomal RNA by the RNA exosome. This Homo sapiens (Human) protein is U3 small nucleolar ribonucleoprotein protein MPP10.